Reading from the N-terminus, the 237-residue chain is Ribosomal RNA small subunit methyltransferase G (237 aa).

Residues glycine 78, phenylalanine 83, 129–130 (AE), and arginine 148 contribute to the S-adenosyl-L-methionine site. A disordered region spans residues 218–237 (KKETPNKYPRKAGMPNKRPL).

It belongs to the methyltransferase superfamily. RNA methyltransferase RsmG family.

It is found in the cytoplasm. Its function is as follows. Specifically methylates the N7 position of a guanine in 16S rRNA. In Streptococcus gordonii (strain Challis / ATCC 35105 / BCRC 15272 / CH1 / DL1 / V288), this protein is Ribosomal RNA small subunit methyltransferase G.